We begin with the raw amino-acid sequence, 311 residues long: Lipoyl synthase (311 aa).

[4Fe-4S] cluster is bound by residues Cys58, Cys63, Cys69, Cys84, Cys88, Cys91, and Ser298. Residues 70-287 (FGHGTATFMI…EQEALAMGFR (218 aa)) enclose the Radical SAM core domain.

This sequence belongs to the radical SAM superfamily. Lipoyl synthase family. [4Fe-4S] cluster serves as cofactor.

It is found in the cytoplasm. The enzyme catalyses [[Fe-S] cluster scaffold protein carrying a second [4Fe-4S](2+) cluster] + N(6)-octanoyl-L-lysyl-[protein] + 2 oxidized [2Fe-2S]-[ferredoxin] + 2 S-adenosyl-L-methionine + 4 H(+) = [[Fe-S] cluster scaffold protein] + N(6)-[(R)-dihydrolipoyl]-L-lysyl-[protein] + 4 Fe(3+) + 2 hydrogen sulfide + 2 5'-deoxyadenosine + 2 L-methionine + 2 reduced [2Fe-2S]-[ferredoxin]. It functions in the pathway protein modification; protein lipoylation via endogenous pathway; protein N(6)-(lipoyl)lysine from octanoyl-[acyl-carrier-protein]: step 2/2. Catalyzes the radical-mediated insertion of two sulfur atoms into the C-6 and C-8 positions of the octanoyl moiety bound to the lipoyl domains of lipoate-dependent enzymes, thereby converting the octanoylated domains into lipoylated derivatives. The chain is Lipoyl synthase from Thiobacillus denitrificans (strain ATCC 25259 / T1).